The following is a 677-amino-acid chain: Pre-mRNA-splicing factor CLF1 (677 aa).

16 HAT repeats span residues 52 to 84, 86 to 118, 120 to 152, 154 to 185, 187 to 218, 220 to 255, 257 to 291, 301 to 333, 335 to 369, 379 to 415, 417 to 448, 450 to 482, 484 to 518, 520 to 551, 570 to 608, and 613 to 646; these read EYQGRKRKEFEDYVRRNRISMNNWMRYAQWELE, KEFRRARSVFERALDVDPTAVVLWIRYIEAEMK, RNINHARNLLDRAVTIYSRVDKLWYKYVYMEEM, GNIPGTRQVFERWMSWEPDEGAWGAYIKLEKR, NEFDRVRAIFERFTVVHPEPKNWIKWARFEEE, GTSDMVREVYGLAIETLGEDFMDEKLFIAYARYEAK, KEFERARAIYKYALDRLPRAKSVALHKAYTTFEKQ, VILSKRRVQYEEQIKENPKNYDIWFDFVRLEES, GDVERVRDVYERAIAQMPPSQEKRHWRRYIYLWIF, KDMERAHQIYQECIRLIPHKKFTFAKIWLMKAQFEIR, MDLQAARKTLGHAIGACPKDKLFKGYIDLERQ, FEFVRCRKLFEKQIEWSPSNCQAWIKFAELERG, DDIDRARAIYELGISQPVLDMPELLWKSYIDFEEY, GEYDRTRALYERLLEKTNHVKVWINFARFEIN, EAKRRARMVFERAHKVFKEKEMKEERVALLNAWKSFEQT, and DDIAKIERQMPSKVKKRRKLDDDRYEEYLDYMFP.

It belongs to the crooked-neck family. As to quaternary structure, associated with the spliceosome.

The protein resides in the nucleus. Its function is as follows. Involved in pre-mRNA splicing and cell cycle progression. Required for the spliceosome assembly and initiation of the DNA replication. In Paracoccidioides brasiliensis, this protein is Pre-mRNA-splicing factor CLF1 (CLF1).